The primary structure comprises 537 residues: MVRLKTSLWVLLLALVSIQLNGSFGSESSKVAYVTLLYGDEFLLGVRVLGKSIRDTGSTKDMVALVSDGVSDYSKKLLKADGWKVEKISLLANPNQVHPTRFWGVYTKLKIFNMTDYKKVVYLDADTIVVKNIEDLFKCSKFCANLKHSERLNSGVMVVEPSEALFNDMMRKVKTLSSYTGGDQGFLNSYYPDFPNARVFDPSVTPEVLKTRPVPAMERLSTLYNADVGLYMLANKWMVDDSKLHVIHYTLGPLKPWDWWTAWLVKPVDAWHSIRVKLEETLPGTGGGSNQHDELVVKFLFLLPLCALLFCIYRSIQGREGSLCWSSFSNQIRYLYYKVRSNGTLGYGGVSTMSPSYQPHSGNAQSKVPQHLGAVSVVVCFTAVLLSLGISFAIVPRQIMPWTGLVLVYEWTFTIFFLLFGVFLLFVHQHGKRIAIQSESSSLDDSAKVHQRAGGSCDVTTLYYGLGMAFLAIAAVSLPYILGITALFTRLGLMVGLAIILAAFMTYASEHLAVRWFLKGLEDRRDTTRSNSLCFLC.

The helical transmembrane segment at Thr6–Ser26 threads the bilayer. Residues Asp124 and Asp126 each coordinate Mn(2+). Substrate-binding positions include Asp124 to Asp126, Asn153 to Gly155, Thr180 to Gln184, and His248 to Lys255. Mn(2+) is bound at residue His248. The next 5 membrane-spanning stretches (helical) occupy residues Asp293–Tyr313, Val375–Val395, Val406–Phe426, Met468–Phe488, and Met494–Val514.

This sequence belongs to the glycosyltransferase 8 family. Glycogenin subfamily. The cofactor is Mn(2+). In terms of tissue distribution, expressed in seedlings, roots, leaves, stems and siliques.

It is found in the golgi apparatus membrane. The enzyme catalyses glucuronate acceptor + UDP-alpha-D-glucuronate = acceptor beta-D-glucuronoside + UDP + H(+). It carries out the reaction a 1D-myo-inositol-1-phospho-N-[(R)-2-hydroxy-very-long-chain fatty acyl]-(R)-4-hydroxysphingoid base + UDP-alpha-D-glucuronate = an alpha-D-glucuronosyl-(1&lt;-&gt;6)-1D-myo-inositol-1-phospho-N-[(R)-2-hydroxy-very-long-chain fatty acyl]-(R)-4-hydroxysphingoid base + UDP + H(+). It participates in sphingolipid metabolism. Mediates the transfer of glucuronic acid (GlcA) from UDP-GlcA to glycosyl inositol phosphorylceramides (GIPCs). The formation of GIPCs sphingolipids is essential for pollen function, plant growth and defense. Required for global fitness. This is Inositol phosphorylceramide glucuronosyltransferase 1 from Arabidopsis thaliana (Mouse-ear cress).